Consider the following 182-residue polypeptide: Small heat shock protein hspG1 (182 aa).

A sHSP domain is found at 43 to 182 (IKRIDIIPSM…SNSSFKININ (140 aa)).

It belongs to the small heat shock protein (HSP20) family.

The protein is Small heat shock protein hspG1 (hspG1) of Dictyostelium discoideum (Social amoeba).